A 215-amino-acid polypeptide reads, in one-letter code: Putative serine/threonine-protein kinase YrzF (215 aa).

A Protein kinase domain is found at 27-215; that stretch reads SEELTLIGKG…HFAQRKRKYS (189 aa). Residues 33-41 and lysine 54 each bind ATP; that span reads IGKGRSAYV. The active-site Proton acceptor is the aspartate 135.

This sequence belongs to the protein kinase superfamily. Ser/Thr protein kinase family.

The catalysed reaction is L-seryl-[protein] + ATP = O-phospho-L-seryl-[protein] + ADP + H(+). It carries out the reaction L-threonyl-[protein] + ATP = O-phospho-L-threonyl-[protein] + ADP + H(+). This chain is Putative serine/threonine-protein kinase YrzF (yrzF), found in Bacillus subtilis (strain 168).